A 1214-amino-acid chain; its full sequence is Inner capsid protein VP3 (1214 aa).

The interval 1 to 80 (MPRRSARKAQ…SVNNDGDIIT (80 aa)) is disordered. Polar residues predominate over residues 8-18 (KAQSATASPAD). Over residues 28–51 (PTTNSPPSTTSPNQAAADANQQQA) the composition is skewed to low complexity. A C2H2-type zinc finger spans residues 117-140 (YVCNVCNARFSTMSALSEHLRSDH).

The protein belongs to the turreted BTV-fold inner capsid family. As to quaternary structure, homodecamer; each decamer is made up of two conformers of VP2, called VP2A and VP2B. 12 homodecamers assemble to form an icosahedral capsid. Interacts with VP6.

The protein localises to the virion. In terms of biological role, inner capsid protein that self-assembles to form an icosahedral capsid with a T=2 symmetry, which consists of 120 copies of VP2, with channels at each of its five-fold vertices. This capsid constitutes the innermost concentric layer of the viral mature particle. In Notemigonus crysoleucas (Golden shiner), this protein is Inner capsid protein VP3 (S3).